The primary structure comprises 97 residues: Cysteine-rich and transmembrane domain-containing protein 1 (97 aa).

The segment covering 1-40 (MNQENPPPYPGPGPTAPYPPYPPQPMGPGPMGGPYPPPQG) has biased composition (pro residues). The interval 1-61 (MNQENPPPYP…QGGPQEPPKT (61 aa)) is disordered. A compositionally biased stretch (low complexity) spans 41-50 (YPYQGYPQYG). A helical membrane pass occupies residues 74 to 91 (LGPSTCLTACWTALCCCC).

This sequence belongs to the CYSTM1 family.

The protein resides in the membrane. The sequence is that of Cysteine-rich and transmembrane domain-containing protein 1 (CYSTM1) from Homo sapiens (Human).